Here is a 493-residue protein sequence, read N- to C-terminus: ATP synthase subunit beta, chloroplastic (493 aa).

170–177 (GGAGVGKT) serves as a coordination point for ATP.

The protein belongs to the ATPase alpha/beta chains family. In terms of assembly, F-type ATPases have 2 components, CF(1) - the catalytic core - and CF(0) - the membrane proton channel. CF(1) has five subunits: alpha(3), beta(3), gamma(1), delta(1), epsilon(1). CF(0) has four main subunits: a(1), b(1), b'(1) and c(9-12).

It localises to the plastid. The protein resides in the chloroplast thylakoid membrane. It carries out the reaction ATP + H2O + 4 H(+)(in) = ADP + phosphate + 5 H(+)(out). Produces ATP from ADP in the presence of a proton gradient across the membrane. The catalytic sites are hosted primarily by the beta subunits. The protein is ATP synthase subunit beta, chloroplastic of Adiantum capillus-veneris (Maidenhair fern).